The following is a 220-amino-acid chain: Protein-L-isoaspartate O-methyltransferase (220 aa).

Residue S67 is part of the active site.

This sequence belongs to the methyltransferase superfamily. L-isoaspartyl/D-aspartyl protein methyltransferase family.

It localises to the cytoplasm. It catalyses the reaction [protein]-L-isoaspartate + S-adenosyl-L-methionine = [protein]-L-isoaspartate alpha-methyl ester + S-adenosyl-L-homocysteine. Its function is as follows. Catalyzes the methyl esterification of L-isoaspartyl residues in peptides and proteins that result from spontaneous decomposition of normal L-aspartyl and L-asparaginyl residues. It plays a role in the repair and/or degradation of damaged proteins. The chain is Protein-L-isoaspartate O-methyltransferase from Chlorobium phaeobacteroides (strain BS1).